Here is a 361-residue protein sequence, read N- to C-terminus: UDP-3-O-acylglucosamine N-acyltransferase (361 aa).

Residue histidine 264 is the Proton acceptor of the active site.

The protein belongs to the transferase hexapeptide repeat family. LpxD subfamily. As to quaternary structure, homotrimer.

It catalyses the reaction a UDP-3-O-[(3R)-3-hydroxyacyl]-alpha-D-glucosamine + a (3R)-hydroxyacyl-[ACP] = a UDP-2-N,3-O-bis[(3R)-3-hydroxyacyl]-alpha-D-glucosamine + holo-[ACP] + H(+). It functions in the pathway bacterial outer membrane biogenesis; LPS lipid A biosynthesis. Catalyzes the N-acylation of UDP-3-O-acylglucosamine using 3-hydroxyacyl-ACP as the acyl donor. Is involved in the biosynthesis of lipid A, a phosphorylated glycolipid that anchors the lipopolysaccharide to the outer membrane of the cell. This is UDP-3-O-acylglucosamine N-acyltransferase from Bordetella avium (strain 197N).